The primary structure comprises 269 residues: GTP cyclohydrolase FolE2 (269 aa).

Belongs to the GTP cyclohydrolase IV family.

It carries out the reaction GTP + H2O = 7,8-dihydroneopterin 3'-triphosphate + formate + H(+). It functions in the pathway cofactor biosynthesis; 7,8-dihydroneopterin triphosphate biosynthesis; 7,8-dihydroneopterin triphosphate from GTP: step 1/1. Functionally, converts GTP to 7,8-dihydroneopterin triphosphate. The chain is GTP cyclohydrolase FolE2 from Burkholderia mallei (strain NCTC 10229).